Here is a 145-residue protein sequence, read N- to C-terminus: Large ribosomal subunit protein bL17 (145 aa).

It belongs to the bacterial ribosomal protein bL17 family. Part of the 50S ribosomal subunit. Contacts protein L32.

This is Large ribosomal subunit protein bL17 from Orientia tsutsugamushi (strain Boryong) (Rickettsia tsutsugamushi).